Consider the following 558-residue polypeptide: Urocanate hydratase (558 aa).

NAD(+) is bound by residues 53–54 (GG), Q131, 177–179 (GMG), E197, R202, 243–244 (NA), 264–268 (QTSAH), 274–275 (YL), and Y323. The active site involves C411. Residue G493 participates in NAD(+) binding.

This sequence belongs to the urocanase family. The cofactor is NAD(+).

The protein resides in the cytoplasm. It catalyses the reaction 4-imidazolone-5-propanoate = trans-urocanate + H2O. Its pathway is amino-acid degradation; L-histidine degradation into L-glutamate; N-formimidoyl-L-glutamate from L-histidine: step 2/3. Its function is as follows. Catalyzes the conversion of urocanate to 4-imidazolone-5-propionate. This is Urocanate hydratase from Idiomarina loihiensis (strain ATCC BAA-735 / DSM 15497 / L2-TR).